We begin with the raw amino-acid sequence, 155 residues long: Medium/long-chain acyl-CoA thioesterase YigI (155 aa).

Belongs to the YigI thioesterase family.

The protein resides in the cytoplasm. The catalysed reaction is a fatty acyl-CoA + H2O = a fatty acid + CoA + H(+). The enzyme catalyses a medium-chain fatty acyl-CoA + H2O = a medium-chain fatty acid + CoA + H(+). It carries out the reaction a long-chain fatty acyl-CoA + H2O = a long-chain fatty acid + CoA + H(+). In terms of biological role, displays thioesterase activity against medium- to long-chain acyl-CoA substrates. Is involved in the thioesterase-dependent beta-oxidation pathway of (9Z,11E)-octadecadienoate (conjugated linoleic acid or CLA), along with TesB and FadM. In Shigella flexneri, this protein is Medium/long-chain acyl-CoA thioesterase YigI (yigI).